The sequence spans 1045 residues: Mitotic deacetylase-associated SANT domain protein (1045 aa).

N-acetylmethionine is present on Met-1. Disordered stretches follow at residues 1–68 (MNLQ…PPPS) and 99–159 (NSVM…PTYY). A compositionally biased stretch (polar residues) spans 132–146 (STWNCHSLSLYSATK). A Glycyl lysine isopeptide (Lys-Gly) (interchain with G-Cter in SUMO2) cross-link involves residue Lys-166. Asymmetric dimethylarginine is present on Arg-193. 5 disordered regions span residues 228 to 264 (QVFR…QQAA), 276 to 305 (SMPQ…AHHS), 330 to 349 (APQP…SRRL), 378 to 397 (HHWP…HPEA), and 410 to 441 (LPDG…STGD). Over residues 240-264 (VAAFPPQKQQQQQQPQQQQQQQQAA) the composition is skewed to low complexity. Residues 412–425 (DGERLAPNGREREA) show a composition bias toward basic and acidic residues. Arg-447 is modified (omega-N-methylarginine). Phosphoserine is present on Ser-461. Positions 543 to 563 (QAGGLDEDGKGPEQNPAEHKP) are disordered. The segment covering 549–563 (EDGKGPEQNPAEHKP) has biased composition (basic and acidic residues). Lys-590 participates in a covalent cross-link: Glycyl lysine isopeptide (Lys-Gly) (interchain with G-Cter in SUMO1); alternate. Lys-590 participates in a covalent cross-link: Glycyl lysine isopeptide (Lys-Gly) (interchain with G-Cter in SUMO2); alternate. A Phosphothreonine modification is found at Thr-655. Phosphoserine is present on Ser-661. Thr-704 is modified (phosphothreonine). Ser-709 carries the post-translational modification Phosphoserine. Thr-715 is modified (phosphothreonine). Residues 721–813 (PRINVGSRFQ…ETLNKLLLKK (93 aa)) form the ELM2 domain. The SANT domain maps to 828–879 (TGSDQWKMAERKLFNKGIAIYKKDFFLVQKLIQTKTVAQCVEFYYTYKKQVK). Residues 887-1045 (TFGDVDTSDE…NTFPCKKCGR (159 aa)) are disordered. 2 stretches are compositionally biased toward basic and acidic residues: residues 894 to 909 (SDEK…DIKT) and 919 to 942 (PRRE…RKEG). Residue Ser-923 is modified to Phosphoserine. Positions 943–957 (EEEVPEIQEKEEQEE) are enriched in acidic residues. Positions 970-980 (ATQTLQANESA) are enriched in polar residues.

As to quaternary structure, interacts with DNTTIP1. Identified in a histone deacetylase complex that contains DNTTIP1, HDAC1 and MIDEAS; this complex assembles into a tetramer that contains four copies of each protein chain.

It localises to the nucleus. This is Mitotic deacetylase-associated SANT domain protein from Homo sapiens (Human).